A 75-amino-acid chain; its full sequence is Microcin H47 (75 aa).

The propeptide occupies 1 to 15 (MREITESQLRYISGA). A helical membrane pass occupies residues 30–50 (AIVGALAGIPGGPLGVVVGAV).

It localises to the secreted. Its subcellular location is the host cell membrane. Bactericidal antibiotic. Active on bacteria phylogenetically related to the producing strain. The polypeptide is Microcin H47 (mchB) (Escherichia coli O6:H1 (strain CFT073 / ATCC 700928 / UPEC)).